A 254-amino-acid polypeptide reads, in one-letter code: Isoprenyl transferase (254 aa).

The active site involves Asp12. Residue Asp12 participates in Mg(2+) binding. Substrate contacts are provided by residues 13-16, Trp17, Arg25, His29, and 57-59; these read GNGR and SSE. The active-site Proton acceptor is the Asn60. Residues Trp61, Arg63, Arg180, and 186–188 each bind substrate; that span reads RLS. Residue Glu199 coordinates Mg(2+).

The protein belongs to the UPP synthase family. Homodimer. Mg(2+) serves as cofactor.

In terms of biological role, catalyzes the condensation of isopentenyl diphosphate (IPP) with allylic pyrophosphates generating different type of terpenoids. The polypeptide is Isoprenyl transferase (Brucella suis biovar 1 (strain 1330)).